Consider the following 198-residue polypeptide: MSNEENKVTEEELDQIIEEAEKVEAAAQEAEAELEEIGDEKDAKIAQLEAALLSSETKVKDQQDAVLRSKAEVENMRRRTEQEIDKARKYALNKFAEELLPVIDNLERAIQAADAEHEVVKPILEGVELTHKTFVDAVSKFGLKEINPEGEAFNPEFHQAMSIQESPDHESNTVMFVMQKGYELNGRVVRPAMVMVAK.

This sequence belongs to the GrpE family. In terms of assembly, homodimer.

It localises to the cytoplasm. Participates actively in the response to hyperosmotic and heat shock by preventing the aggregation of stress-denatured proteins, in association with DnaK and GrpE. It is the nucleotide exchange factor for DnaK and may function as a thermosensor. Unfolded proteins bind initially to DnaJ; upon interaction with the DnaJ-bound protein, DnaK hydrolyzes its bound ATP, resulting in the formation of a stable complex. GrpE releases ADP from DnaK; ATP binding to DnaK triggers the release of the substrate protein, thus completing the reaction cycle. Several rounds of ATP-dependent interactions between DnaJ, DnaK and GrpE are required for fully efficient folding. This Vibrio harveyi (Beneckea harveyi) protein is Protein GrpE.